A 200-amino-acid polypeptide reads, in one-letter code: Glycerol-3-phosphate acyltransferase (200 aa).

A run of 5 helical transmembrane segments spans residues 1–21 (MLLS…MPNG), 53–73 (GPAL…VLLA), 81–101 (WVQV…VWLG), 114–134 (MFLG…MAVI), and 139–159 (IVSL…LTSG).

This sequence belongs to the PlsY family. In terms of assembly, probably interacts with PlsX.

The protein localises to the cell inner membrane. It carries out the reaction an acyl phosphate + sn-glycerol 3-phosphate = a 1-acyl-sn-glycero-3-phosphate + phosphate. It participates in lipid metabolism; phospholipid metabolism. Its function is as follows. Catalyzes the transfer of an acyl group from acyl-phosphate (acyl-PO(4)) to glycerol-3-phosphate (G3P) to form lysophosphatidic acid (LPA). This enzyme utilizes acyl-phosphate as fatty acyl donor, but not acyl-CoA or acyl-ACP. This is Glycerol-3-phosphate acyltransferase from Synechococcus sp. (strain CC9902).